Reading from the N-terminus, the 876-residue chain is Exosome complex component 10 homolog (876 aa).

Positions 1-22 are disordered; that stretch reads MSGEESMPDEEQKQSEEEEEMI. Residues 279–445 form the 3'-5' exonuclease domain; sequence TMIDTKEKLE…YSYDMLREQL (167 aa). The Mg(2+) site is built by D303, E305, D361, and D430. One can recognise an HRDC domain in the interval 489–569; that stretch reads NTRQDYALTH…VEARDVKLEK (81 aa). Composition is skewed to basic and acidic residues over residues 690–730, 741–752, and 834–847; these read EKQE…EFDA, VPDDPNKPKDPE, and KPVR…DPFH. A disordered region spans residues 690 to 876; sequence EKQEEEERKE…NRQGTINYKK (187 aa). Residues 848–861 are compositionally biased toward basic residues; sequence QKYRLKNKTKKNMA.

Belongs to the exosome component 10/RRP6 family. In terms of assembly, component of the RNA exosome complex. Interacts with crn-5. It depends on Mg(2+) as a cofactor. As to expression, ubiquitously expressed.

It is found in the nucleus. The protein localises to the nucleolus. The protein resides in the nucleoplasm. Its function is as follows. Catalytic component of the RNA exosome complex which has 3'-&gt;5' exoribonuclease activity and participates in a multitude of cellular RNA processing and degradation events. Involved in apoptotic DNA degradation. Involved in regulation of antisense ribosomal siRNA production. Involved in response to cold-warm shock. The sequence is that of Exosome complex component 10 homolog from Caenorhabditis elegans.